Consider the following 364-residue polypeptide: Putative serine/threonine-protein phosphatase C06A1.3 (364 aa).

Residues 1–24 (MSTDGNNNKKGSKEGPKSSEISKF) form a disordered region. Basic and acidic residues predominate over residues 11-24 (GSKEGPKSSEISKF). Residues aspartate 93, histidine 95, aspartate 121, and asparagine 153 each contribute to the Mn(2+) site. The Proton donor role is filled by histidine 154. Mn(2+) is bound by residues histidine 202 and histidine 277.

It belongs to the PPP phosphatase family. PP-1 subfamily. Requires Mn(2+) as cofactor.

It catalyses the reaction O-phospho-L-seryl-[protein] + H2O = L-seryl-[protein] + phosphate. The enzyme catalyses O-phospho-L-threonyl-[protein] + H2O = L-threonyl-[protein] + phosphate. The polypeptide is Putative serine/threonine-protein phosphatase C06A1.3 (Caenorhabditis elegans).